The chain runs to 405 residues: Protein lin-11 (405 aa).

Residues Lys-17 and Lys-18 each participate in a glycyl lysine isopeptide (Lys-Gly) (interchain with G-Cter in SUMO) cross-link. LIM zinc-binding domains follow at residues 68 to 124 and 127 to 187; these read CAAC…RRYS and CAGC…TATK. A compositionally biased stretch (polar residues) spans 189–205; sequence STPTSIHRPVSNGSECN. 2 disordered regions span residues 189–208 and 224–246; these read STPTSIHRPVSNGSECNSDV and GEGDCGKDNSDDSNSAKRRGPRT. The segment at residues 241-300 is a DNA-binding region (homeobox); it reads RRGPRTTIKAKQLETLKNAFAATPKPTRHIREQLAAETGLNMRVIQVWFQNRRSKERRMK.

Expressed in ADL, AVJL, AIZL, RICL, RIF and AVG neurons.

It is found in the nucleus. Its function is as follows. Probable transcription factor which is required for asymmetric division of vulval blast cells. Involved in olfactory plasticity probably by regulating the expression of transcription factor mbr-1 in RIF neurons. Plays a role in the chemorepulsive response toward ascaroside pheromones mediated by the ADL sensory neurons, probably by regulating E-box motif 5'-CANNTG-3' containing target genes in the ADL neurons. Plays a role in the differentiation of the ADL sensory neurons. The protein is Protein lin-11 (lin-11) of Caenorhabditis elegans.